Reading from the N-terminus, the 368-residue chain is Geranylgeranyl pyrophosphate synthase dpfgD (368 aa).

The isopentenyl diphosphate site is built by Lys48, Arg51, and His80. Mg(2+)-binding residues include Asp87 and Asp91. Arg96 contributes to the dimethylallyl diphosphate binding site. An isopentenyl diphosphate-binding site is contributed by Arg97. Residues Lys174, Thr175, and Gln208 each contribute to the dimethylallyl diphosphate site. Mg(2+) is bound at residue Asp211. 3 residues coordinate dimethylallyl diphosphate: Asn215, Lys225, and Lys235.

Belongs to the FPP/GGPP synthase family. It depends on Mg(2+) as a cofactor.

The catalysed reaction is isopentenyl diphosphate + dimethylallyl diphosphate = (2E)-geranyl diphosphate + diphosphate. It catalyses the reaction isopentenyl diphosphate + (2E)-geranyl diphosphate = (2E,6E)-farnesyl diphosphate + diphosphate. The enzyme catalyses isopentenyl diphosphate + (2E,6E)-farnesyl diphosphate = (2E,6E,10E)-geranylgeranyl diphosphate + diphosphate. It functions in the pathway secondary metabolite biosynthesis; terpenoid biosynthesis. Functionally, geranylgeranyl pyrophosphate synthase; part of the gene cluster that mediates the biosynthesis of diterpenoid pyrones. The first step of the pathway is the synthesis of the alpha-pyrone moiety by the polyketide synthase dpfgA via condensation of one acetyl-CoA starter unit with 3 malonyl-CoA units and 2 methylations. The alpha-pyrone is then combined with geranylgeranyl pyrophosphate (GGPP) formed by the GGPP synthase dpfgD through the action of the prenyltransferase dpfgC to yield a linear alpha-pyrone diterpenoid. Subsequent steps in the diterpenoid pyrone biosynthetic pathway involve the decalin core formation, which is initiated by the epoxidation of the C10-C11 olefin by the FAD-dependent oxidoreductase dpfgE, and is followed by a cyclization cascade catalyzed by the terpene cyclase dpfgB. The short chain dehydrogenase/reductase dpfgG then oxidizes the 8S hydroxy group to a ketone and the short chain dehydrogenase/reductase dpfgH reduces the ketone to the 8R hydroxy group to yield higginsianin B. Higginsianin B is further methylated by the methyltransferase dpfgI to produce the intermediate named FDDP B. The cytochrome P450 monooxygenase dfgpJ then catalyzes a three-step oxidation at C-27 to generate a carboxylic acid as well as C-26 hydroxylation. Finally, methyltransferase dpfgK methylates the carboxylic acid generated by dpfgJ, yielding the final diterpenoid pyrones from the pathway which were named FDDP D and FDDP E. The chain is Geranylgeranyl pyrophosphate synthase dpfgD from Gibberella zeae (strain ATCC MYA-4620 / CBS 123657 / FGSC 9075 / NRRL 31084 / PH-1) (Wheat head blight fungus).